The following is a 252-amino-acid chain: UPF0273 protein MK0039 (252 aa).

In terms of domain architecture, KaiC spans 4-248 (ERVSTGIPGM…VFVKERGEVR (245 aa)). 31–38 (GGPGTGKT) provides a ligand contact to ATP.

This sequence belongs to the UPF0273 family.

In Methanopyrus kandleri (strain AV19 / DSM 6324 / JCM 9639 / NBRC 100938), this protein is UPF0273 protein MK0039.